Here is a 359-residue protein sequence, read N- to C-terminus: Fructose-bisphosphate aldolase, cytoplasmic isozyme (359 aa).

Substrate is bound by residues Arg-52 and Lys-142. Glu-184 serves as the catalytic Proton acceptor. Catalysis depends on Lys-226, which acts as the Schiff-base intermediate with dihydroxyacetone-P.

Belongs to the class I fructose-bisphosphate aldolase family.

Its subcellular location is the cytoplasm. It catalyses the reaction beta-D-fructose 1,6-bisphosphate = D-glyceraldehyde 3-phosphate + dihydroxyacetone phosphate. It functions in the pathway carbohydrate degradation; glycolysis; D-glyceraldehyde 3-phosphate and glycerone phosphate from D-glucose: step 4/4. The protein is Fructose-bisphosphate aldolase, cytoplasmic isozyme (ALDC) of Cicer arietinum (Chickpea).